The chain runs to 123 residues: Probable non-functional immunoglobulin lambda variable 11-55 (123 aa).

The N-terminal stretch at 1–19 (MALTPLLLLLLSHCTGSLS) is a signal peptide. The interval 20–44 (RPVLTQPPSLSASPGATARLPCTLS) is framework-1. In terms of domain architecture, Ig-like spans 21–123 (PVLTQPPSLS…YCQVYESSAN (103 aa)). Cys41 and Cys115 are joined by a disulfide. A complementarity-determining-1 region spans residues 45 to 53 (SDLSVGGKN). The segment at 54-70 (MFWYQQKLGSSPRLFLY) is framework-2. The segment at 71 to 77 (HYSDSDK) is complementarity-determining-2. Residues 78–115 (QLGPGVPSRVSGSKETSSNTAFLLISGLQPEDEADYYC) are framework-3. A complementarity-determining-3 region spans residues 116 to 123 (QVYESSAN).

As to quaternary structure, immunoglobulins are composed of two identical heavy chains and two identical light chains; disulfide-linked.

It localises to the secreted. The protein resides in the cell membrane. Its function is as follows. Probable non-functional open reading frame (ORF) of V region of the variable domain of immunoglobulin light chains. Non-functional ORF generally cannot participate in the synthesis of a productive immunoglobulin chain due to altered V-(D)-J or switch recombination and/or splicing site (at mRNA level) and/or conserved amino acid change (protein level). Immunoglobulins, also known as antibodies, are membrane-bound or secreted glycoproteins produced by B lymphocytes. In the recognition phase of humoral immunity, the membrane-bound immunoglobulins serve as receptors which, upon binding of a specific antigen, trigger the clonal expansion and differentiation of B lymphocytes into immunoglobulins-secreting plasma cells. Secreted immunoglobulins mediate the effector phase of humoral immunity, which results in the elimination of bound antigens. The antigen binding site is formed by the variable domain of one heavy chain, together with that of its associated light chain. Thus, each immunoglobulin has two antigen binding sites with remarkable affinity for a particular antigen. The variable domains are assembled by a process called V-(D)-J rearrangement and can then be subjected to somatic hypermutations which, after exposure to antigen and selection, allow affinity maturation for a particular antigen. The chain is Probable non-functional immunoglobulin lambda variable 11-55 from Homo sapiens (Human).